The primary structure comprises 781 residues: DEAD-box ATP-dependent RNA helicase 50 (781 aa).

5 disordered regions span residues E72–S103, G117–F148, I166–R240, G254–R292, and Y313–G342. The segment covering S79–E88 has biased composition (low complexity). Over residues E130–S143 the composition is skewed to acidic residues. Residues K171–L197 are compositionally biased toward basic and acidic residues. Over residues E198–S208 the composition is skewed to acidic residues. A compositionally biased stretch (polar residues) spans N216–S226. Over residues G254–S274 the composition is skewed to basic and acidic residues. The segment covering R275–S286 has biased composition (low complexity). A compositionally biased stretch (basic and acidic residues) spans Y313–L325. Residues K374–A402 carry the Q motif motif. The Helicase ATP-binding domain occupies F405 to V586. D418 to T425 is a binding site for ATP. The DEAD box signature appears at D533–D536. The Helicase C-terminal domain occupies N621–T781.

Belongs to the DEAD box helicase family.

It catalyses the reaction ATP + H2O = ADP + phosphate + H(+). Functionally, probably involved in resistance to biotic and abiotic stresses. The polypeptide is DEAD-box ATP-dependent RNA helicase 50 (RH50) (Arabidopsis thaliana (Mouse-ear cress)).